Reading from the N-terminus, the 32-residue chain is Enolase (32 aa).

It belongs to the enolase family. Homodimer. The cofactor is Mg(2+).

Its subcellular location is the cytoplasm. It carries out the reaction (2R)-2-phosphoglycerate = phosphoenolpyruvate + H2O. It participates in carbohydrate degradation; glycolysis; pyruvate from D-glyceraldehyde 3-phosphate: step 4/5. This is Enolase from Imperata cylindrica (Cogon grass).